A 372-amino-acid chain; its full sequence is Prostaglandin E synthase 2 (372 aa).

The Lumenal portion of the chain corresponds to 1 to 54; that stretch reads MAHAVRALWPHGRALAWRLGDRPALGLHAQSRAGFTGAAGGSGPAATARKGGPR. The helical transmembrane segment at 55-71 threads the bilayer; sequence LLGAAALALGGALGLYH. At 72–372 the chain is on the cytoplasmic side; the sequence is TARWHLRAQD…VEKAIAEAPQ (301 aa). Residues 87-190 enclose the Glutaredoxin domain; the sequence is SATQLSLSSR…DIITYYPPMK (104 aa). At Ser-92 the chain carries Phosphoserine. Residues Val-145 and 161–162 each bind glutathione; that span reads DS. The 114-residue stretch at 259–372 folds into the GST C-terminal domain; that stretch reads DYIVKEGNFG…VEKAIAEAPQ (114 aa).

Belongs to the GST superfamily. As to quaternary structure, may interact with CEBPB. Interacts with EXOSC10. Homodimer. Synthesized as a Golgi membrane-associated protein, and the proteolytic removal of the N-terminal hydrophobic domain leads to the formation of a mature cytosolic enzyme. As to expression, detected in heart (at protein level). Widely expressed. Expressed in heart &gt; kidney &gt; muscle &gt; testis &gt; endometrium = ovary &gt; myometrium = spleen = lung. In endometrium, it is mainly expressed in luminal epithelial cells followed by glandular epithelial cells, but expression is also present in stromal cells at a lower level.

It localises to the microsome membrane. The protein localises to the cytoplasm. It carries out the reaction prostaglandin H2 = prostaglandin E2. It catalyses the reaction prostaglandin H2 = (12S)-hydroxy-(5Z,8E,10E)-heptadecatrienoate + malonaldehyde. It functions in the pathway lipid metabolism; prostaglandin biosynthesis. Its activity is regulated as follows. Isomerase activity is increased by sulfhydril compounds. Dithiothreitol (DTT) is most effective, followed by glutathione (GSH) and 2-mercaptoethanol. Functionally, isomerase that catalyzes the conversion of PGH2 into the more stable prostaglandin E2 (PGE2) (in vitro). The biological function and the GSH-dependent property of PTGES2 is still under debate. In vivo, PTGES2 could form a complex with GSH and heme and would not participate in PGE2 synthesis but would catalyze the degradation of prostaglandin E2 H2 (PGH2) to 12(S)-hydroxy-5(Z),8(E),10(E)-heptadecatrienoic acid (HHT) and malondialdehyde (MDA). This chain is Prostaglandin E synthase 2 (PTGES2), found in Bos taurus (Bovine).